Here is a 288-residue protein sequence, read N- to C-terminus: Threonine-rich protein (288 aa).

Positions methionine 1–serine 20 are cleaved as a signal peptide. Residues threonine 141 to glycine 150 show a composition bias toward polar residues. A disordered region spans residues threonine 141 to threonine 260. Residues asparagine 151 to proline 253 are compositionally biased toward low complexity.

As to expression, component of the acid-insoluble and acid-soluble organic matrix of the aragonitic skeleton (at protein level).

The protein localises to the secreted. This Acropora millepora (Staghorn coral) protein is Threonine-rich protein.